Consider the following 227-residue polypeptide: tRNA (guanine-N(7)-)-methyltransferase (227 aa).

Positions M1–A21 are disordered. The S-adenosyl-L-methionine site is built by E54, E79, D114, and D136. D136 is a catalytic residue. Residues K140, D172, and T206–E209 contribute to the substrate site.

Belongs to the class I-like SAM-binding methyltransferase superfamily. TrmB family.

The catalysed reaction is guanosine(46) in tRNA + S-adenosyl-L-methionine = N(7)-methylguanosine(46) in tRNA + S-adenosyl-L-homocysteine. It functions in the pathway tRNA modification; N(7)-methylguanine-tRNA biosynthesis. In terms of biological role, catalyzes the formation of N(7)-methylguanine at position 46 (m7G46) in tRNA. This is tRNA (guanine-N(7)-)-methyltransferase from Granulibacter bethesdensis (strain ATCC BAA-1260 / CGDNIH1).